A 405-amino-acid chain; its full sequence is Tyrosine--tRNA ligase (405 aa).

Residues 48 to 57 (PTAPDLHLGH) carry the 'HIGH' region motif. A 'KMSKS' region motif is present at residues 232–236 (KMSKS). An ATP-binding site is contributed by Lys-235. The region spanning 343–404 (IWLPKLLADA…GKRRFVKVIF (62 aa)) is the S4 RNA-binding domain.

The protein belongs to the class-I aminoacyl-tRNA synthetase family. TyrS type 2 subfamily. Homodimer.

It localises to the cytoplasm. The enzyme catalyses tRNA(Tyr) + L-tyrosine + ATP = L-tyrosyl-tRNA(Tyr) + AMP + diphosphate + H(+). In terms of biological role, catalyzes the attachment of tyrosine to tRNA(Tyr) in a two-step reaction: tyrosine is first activated by ATP to form Tyr-AMP and then transferred to the acceptor end of tRNA(Tyr). The sequence is that of Tyrosine--tRNA ligase from Desulfotalea psychrophila (strain LSv54 / DSM 12343).